Here is a 112-residue protein sequence, read N- to C-terminus: Large ribosomal subunit protein eL33y (112 aa).

Belongs to the eukaryotic ribosomal protein eL33 family.

This Arabidopsis thaliana (Mouse-ear cress) protein is Large ribosomal subunit protein eL33y (RPL35AC).